We begin with the raw amino-acid sequence, 121 residues long: Small ribosomal subunit protein uS13 (121 aa).

Residues 93–121 are disordered; that stretch reads RKGLPVRGQKTKTNARTRKGKRKTVGAKS.

It belongs to the universal ribosomal protein uS13 family. As to quaternary structure, part of the 30S ribosomal subunit. Forms a loose heterodimer with protein S19. Forms two bridges to the 50S subunit in the 70S ribosome.

In terms of biological role, located at the top of the head of the 30S subunit, it contacts several helices of the 16S rRNA. In the 70S ribosome it contacts the 23S rRNA (bridge B1a) and protein L5 of the 50S subunit (bridge B1b), connecting the 2 subunits; these bridges are implicated in subunit movement. Contacts the tRNAs in the A and P-sites. In Campylobacter lari (strain RM2100 / D67 / ATCC BAA-1060), this protein is Small ribosomal subunit protein uS13.